A 208-amino-acid polypeptide reads, in one-letter code: Guanylate kinase (208 aa).

One can recognise a Guanylate kinase-like domain in the interval 3–181 (GSLFIITAAS…ALTELKAIIV (179 aa)). 10 to 17 (AASGTGKT) provides a ligand contact to ATP.

It belongs to the guanylate kinase family.

It is found in the cytoplasm. The catalysed reaction is GMP + ATP = GDP + ADP. In terms of biological role, essential for recycling GMP and indirectly, cGMP. The protein is Guanylate kinase of Psychrobacter arcticus (strain DSM 17307 / VKM B-2377 / 273-4).